The chain runs to 233 residues: Large ribosomal subunit protein uL3 (233 aa).

The disordered stretch occupies residues F145 to R172. Q168 is subject to N5-methylglutamine.

It belongs to the universal ribosomal protein uL3 family. As to quaternary structure, part of the 50S ribosomal subunit. Forms a cluster with proteins L14 and L19. In terms of processing, methylated by PrmB.

Functionally, one of the primary rRNA binding proteins, it binds directly near the 3'-end of the 23S rRNA, where it nucleates assembly of the 50S subunit. This Bordetella petrii (strain ATCC BAA-461 / DSM 12804 / CCUG 43448) protein is Large ribosomal subunit protein uL3.